A 228-amino-acid polypeptide reads, in one-letter code: Urease accessory protein UreF (228 aa).

It belongs to the UreF family. As to quaternary structure, ureD, UreF and UreG form a complex that acts as a GTP-hydrolysis-dependent molecular chaperone, activating the urease apoprotein by helping to assemble the nickel containing metallocenter of UreC. The UreE protein probably delivers the nickel.

The protein localises to the cytoplasm. In terms of biological role, required for maturation of urease via the functional incorporation of the urease nickel metallocenter. The chain is Urease accessory protein UreF from Dechloromonas aromatica (strain RCB).